Here is an 88-residue protein sequence, read N- to C-terminus: Putative membrane protein insertion efficiency factor (88 aa).

The protein belongs to the UPF0161 family.

The protein resides in the cell inner membrane. Functionally, could be involved in insertion of integral membrane proteins into the membrane. This is Putative membrane protein insertion efficiency factor from Burkholderia vietnamiensis (strain G4 / LMG 22486) (Burkholderia cepacia (strain R1808)).